Here is a 1913-residue protein sequence, read N- to C-terminus: GREB1-like protein (1913 aa).

A compositionally biased stretch (acidic residues) spans 86–96; sequence MEDDEDEEEMS. 4 disordered regions span residues 86–111, 281–309, 1097–1157, and 1179–1207; these read MEDD…KPAP, NGTS…SPRP, EAER…TSSI, and DSLD…LAWS. Positions 289–301 are enriched in low complexity; the sequence is KSSSCSSTPSRPG. The segment covering 1118–1157 has biased composition (polar residues); that stretch reads PQSNSSAVTGTSGSIMENGVSSSSTAGKPQQQLLTPTSSI. The segment covering 1187 to 1200 has biased composition (low complexity); it reads SSTTSKPSSSSSSS. The helical transmembrane segment at 1832–1852 threads the bilayer; sequence GVFFSGLLLYLCDSFVGADLL.

Belongs to the GREB1 family. As to expression, expressed in the inner ear, with a high presence in the spiral ganglia, cochlear nerve bundles, and hair cells.

The protein localises to the membrane. Functionally, plays a major role in early metanephros and genital development. This is GREB1-like protein (Greb1l) from Mus musculus (Mouse).